We begin with the raw amino-acid sequence, 436 residues long: Small ribosomal subunit protein uS5m (436 aa).

The 67-residue stretch at 152-218 folds into the S5 DRBM domain; it reads FETYCLEVKR…GMASRKLFHV (67 aa). The interval 417 to 436 is disordered; the sequence is GVEPMPLGIGLSHVVPKKDD.

It belongs to the universal ribosomal protein uS5 family. As to quaternary structure, component of the mitochondrial ribosome small subunit (28S) which comprises a 12S rRNA and about 30 distinct proteins.

It is found in the mitochondrion. This chain is Small ribosomal subunit protein uS5m (mrps-5), found in Caenorhabditis elegans.